We begin with the raw amino-acid sequence, 88 residues long: MNMSKQPVSNVRAIQANINIPMGAFRPGAGQPPRRKECTPEVEEGVPPTSDEEKKPIPGAKKLPGPAVNLSEIQNIKSELKYVPKAEQ.

The interval 22–66 (MGAFRPGAGQPPRRKECTPEVEEGVPPTSDEEKKPIPGAKKLPGP) is disordered.

The protein belongs to the SMPX family. Preferentially and abundantly expressed in heart and skeletal muscle.

Plays a role in the regulatory network through which muscle cells coordinate their structural and functional states during growth, adaptation, and repair. The polypeptide is Small muscular protein (SMPX) (Homo sapiens (Human)).